The following is a 137-amino-acid chain: 6,7-dimethyl-8-ribityllumazine synthase (137 aa).

Residues Phe11, 43 to 45 (SFD), and 67 to 69 (CVI) each bind 5-amino-6-(D-ribitylamino)uracil. Residue 72 to 73 (DT) coordinates (2S)-2-hydroxy-3-oxobutyl phosphate. The active-site Proton donor is the His75. Leu100 serves as a coordination point for 5-amino-6-(D-ribitylamino)uracil. Arg115 contributes to the (2S)-2-hydroxy-3-oxobutyl phosphate binding site.

The protein belongs to the DMRL synthase family. In terms of assembly, forms an icosahedral capsid composed of 60 subunits, arranged as a dodecamer of pentamers.

The catalysed reaction is (2S)-2-hydroxy-3-oxobutyl phosphate + 5-amino-6-(D-ribitylamino)uracil = 6,7-dimethyl-8-(1-D-ribityl)lumazine + phosphate + 2 H2O + H(+). It functions in the pathway cofactor biosynthesis; riboflavin biosynthesis; riboflavin from 2-hydroxy-3-oxobutyl phosphate and 5-amino-6-(D-ribitylamino)uracil: step 1/2. Catalyzes the formation of 6,7-dimethyl-8-ribityllumazine by condensation of 5-amino-6-(D-ribitylamino)uracil with 3,4-dihydroxy-2-butanone 4-phosphate. This is the penultimate step in the biosynthesis of riboflavin. This is 6,7-dimethyl-8-ribityllumazine synthase from Methanococcus maripaludis (strain DSM 14266 / JCM 13030 / NBRC 101832 / S2 / LL).